A 197-amino-acid polypeptide reads, in one-letter code: dTTP/UTP pyrophosphatase (197 aa).

Aspartate 70 functions as the Proton acceptor in the catalytic mechanism.

It belongs to the Maf family. YhdE subfamily. The cofactor is a divalent metal cation.

The protein localises to the cytoplasm. It catalyses the reaction dTTP + H2O = dTMP + diphosphate + H(+). The enzyme catalyses UTP + H2O = UMP + diphosphate + H(+). In terms of biological role, nucleoside triphosphate pyrophosphatase that hydrolyzes dTTP and UTP. May have a dual role in cell division arrest and in preventing the incorporation of modified nucleotides into cellular nucleic acids. In Methanosarcina mazei (strain ATCC BAA-159 / DSM 3647 / Goe1 / Go1 / JCM 11833 / OCM 88) (Methanosarcina frisia), this protein is dTTP/UTP pyrophosphatase.